The following is a 141-amino-acid chain: Large-conductance mechanosensitive channel (141 aa).

Transmembrane regions (helical) follow at residues 16–36 (VIDLAVGVIIGAAFGKIVDSL) and 86–106 (GNFITVAVNFLILAFIVFLMV).

This sequence belongs to the MscL family. In terms of assembly, homopentamer.

The protein resides in the cell inner membrane. Its function is as follows. Channel that opens in response to stretch forces in the membrane lipid bilayer. May participate in the regulation of osmotic pressure changes within the cell. The sequence is that of Large-conductance mechanosensitive channel from Ralstonia nicotianae (strain ATCC BAA-1114 / GMI1000) (Ralstonia solanacearum).